We begin with the raw amino-acid sequence, 346 residues long: Biotin synthase (346 aa).

The 219-residue stretch at Gln-38–Thr-256 folds into the Radical SAM core domain. Residues Cys-53, Cys-57, and Cys-60 each contribute to the [4Fe-4S] cluster site. [2Fe-2S] cluster contacts are provided by Cys-97, Cys-128, Cys-188, and Arg-260.

Belongs to the radical SAM superfamily. Biotin synthase family. As to quaternary structure, homodimer. It depends on [4Fe-4S] cluster as a cofactor. [2Fe-2S] cluster serves as cofactor.

It carries out the reaction (4R,5S)-dethiobiotin + (sulfur carrier)-SH + 2 reduced [2Fe-2S]-[ferredoxin] + 2 S-adenosyl-L-methionine = (sulfur carrier)-H + biotin + 2 5'-deoxyadenosine + 2 L-methionine + 2 oxidized [2Fe-2S]-[ferredoxin]. The protein operates within cofactor biosynthesis; biotin biosynthesis; biotin from 7,8-diaminononanoate: step 2/2. In terms of biological role, catalyzes the conversion of dethiobiotin (DTB) to biotin by the insertion of a sulfur atom into dethiobiotin via a radical-based mechanism. The chain is Biotin synthase from Citrobacter koseri (strain ATCC BAA-895 / CDC 4225-83 / SGSC4696).